The primary structure comprises 383 residues: Ovalbumin (383 aa).

Gly-2 carries the N-acetylglycine modification. The segment at residues 22 to 48 (HHANDNMLYSPFAILSTLAMVFLGAKD) is a signal peptide (not cleaved). The residue at position 69 (Ser-69) is a Phosphoserine. A disulfide bond links Cys-74 and Cys-121. 2 N-linked (GlcNAc...) asparagine glycosylation sites follow: Asn-293 and Asn-312. A Phosphoserine modification is found at Ser-345.

This sequence belongs to the serpin family. Ov-serpin subfamily. Post-translationally, the signal sequence is not cleaved. The functional signal for membrane translocation of ovalbumin becomes accessible when the nascent chain is 50 to 60 residues long. The hydrophobic sequence which lies between residues 27 and 43 folds back on the preceding residues to form an amphipathic hairpin structure which is the signal element recognized by the membrane. In terms of tissue distribution, major protein of egg white.

It is found in the secreted. Its function is as follows. Storage protein of egg white. Lack protease inhibitory activity. The polypeptide is Ovalbumin (SERPINB14) (Coturnix coturnix (Common quail)).